The sequence spans 1175 residues: Chromosome partition protein Smc (1175 aa).

32 to 39 contacts ATP; the sequence is PNGCGKSN. Positions 170–504 form a coiled coil; it reads VSKYKERRRE…ALKALQEKVK (335 aa). Positions 524 to 625 constitute an SMC hinge domain; it reads LWSRIAIEPG…YTAPTLEEAL (102 aa). Coiled-coil stretches lie at residues 684–918 and 944–1022; these read DESR…FQLK and SQSI…ELLS. The tract at residues 807 to 849 is disordered; it reads RQAQEATFSRRSLEARRGELSRTIETASQQARSLADEQQRAQD. The segment covering 817–828 has biased composition (basic and acidic residues); that stretch reads RSLEARRGELSR. Over residues 829-838 the composition is skewed to polar residues; it reads TIETASQQAR. The segment covering 840–849 has biased composition (basic and acidic residues); it reads LADEQQRAQD.

Belongs to the SMC family. Homodimer.

It localises to the cytoplasm. Functionally, required for chromosome condensation and partitioning. This chain is Chromosome partition protein Smc, found in Delftia acidovorans (strain DSM 14801 / SPH-1).